Here is a 343-residue protein sequence, read N- to C-terminus: Dihydroorotase (343 aa).

Zn(2+)-binding residues include H13 and H15. Substrate is bound by residues 15-17 (HLR) and N41. Positions 99, 136, and 174 each coordinate Zn(2+). At K99 the chain carries N6-carboxylysine. Position 136 (H136) interacts with substrate. L219 contacts substrate. Residue D247 participates in Zn(2+) binding. The active site involves D247. Positions 251 and 263 each coordinate substrate.

The protein belongs to the metallo-dependent hydrolases superfamily. DHOase family. Class II DHOase subfamily. Homodimer. The cofactor is Zn(2+).

It carries out the reaction (S)-dihydroorotate + H2O = N-carbamoyl-L-aspartate + H(+). Its pathway is pyrimidine metabolism; UMP biosynthesis via de novo pathway; (S)-dihydroorotate from bicarbonate: step 3/3. Its function is as follows. Catalyzes the reversible cyclization of carbamoyl aspartate to dihydroorotate. This Shewanella baltica (strain OS195) protein is Dihydroorotase.